The following is a 230-amino-acid chain: Phosphoribosylaminoimidazole-succinocarboxamide synthase (230 aa).

It belongs to the SAICAR synthetase family.

The enzyme catalyses 5-amino-1-(5-phospho-D-ribosyl)imidazole-4-carboxylate + L-aspartate + ATP = (2S)-2-[5-amino-1-(5-phospho-beta-D-ribosyl)imidazole-4-carboxamido]succinate + ADP + phosphate + 2 H(+). Its pathway is purine metabolism; IMP biosynthesis via de novo pathway; 5-amino-1-(5-phospho-D-ribosyl)imidazole-4-carboxamide from 5-amino-1-(5-phospho-D-ribosyl)imidazole-4-carboxylate: step 1/2. The sequence is that of Phosphoribosylaminoimidazole-succinocarboxamide synthase (purC) from Thermotoga maritima (strain ATCC 43589 / DSM 3109 / JCM 10099 / NBRC 100826 / MSB8).